The chain runs to 573 residues: Potassium-transporting ATPase potassium-binding subunit (573 aa).

A run of 10 helical transmembrane segments spans residues 3–23 (AEGLLQILLYLGLLAAVTPLL), 65–85 (GYTLALLSFNLLGLLLLYALL), 136–156 (GLTVQNFVSAATGIAVAVALI), 179–199 (LYVLLPLAFLGALVLVWQGVP), 254–274 (LTNLLESFYLLMIAAALIYSF), 286–306 (ALWTAVFILFVAGLAVTWWAE), 383–403 (AGLYGLLVFVILAVFIAGLMV), 423–443 (VIAVLVFPLGILGGAALTTVV), 489–509 (GLGLAMLLGRFAVIVPTLAIA), and 531–551 (LFITLLIATILIVGGLTFFPA).

Belongs to the KdpA family. In terms of assembly, the system is composed of three essential subunits: KdpA, KdpB and KdpC.

It is found in the cell inner membrane. Its function is as follows. Part of the high-affinity ATP-driven potassium transport (or Kdp) system, which catalyzes the hydrolysis of ATP coupled with the electrogenic transport of potassium into the cytoplasm. This subunit binds the periplasmic potassium ions and delivers the ions to the membrane domain of KdpB through an intramembrane tunnel. This is Potassium-transporting ATPase potassium-binding subunit from Rhodospirillum centenum (strain ATCC 51521 / SW).